A 201-amino-acid polypeptide reads, in one-letter code: FMN-dependent NADH:quinone oxidoreductase (201 aa).

FMN contacts are provided by residues S10, 16 to 18, 96 to 99, and 140 to 143; these read SQS, MYNF, and SRGG.

This sequence belongs to the azoreductase type 1 family. In terms of assembly, homodimer. FMN serves as cofactor.

It catalyses the reaction 2 a quinone + NADH + H(+) = 2 a 1,4-benzosemiquinone + NAD(+). It carries out the reaction N,N-dimethyl-1,4-phenylenediamine + anthranilate + 2 NAD(+) = 2-(4-dimethylaminophenyl)diazenylbenzoate + 2 NADH + 2 H(+). Quinone reductase that provides resistance to thiol-specific stress caused by electrophilic quinones. Functionally, also exhibits azoreductase activity. Catalyzes the reductive cleavage of the azo bond in aromatic azo compounds to the corresponding amines. The polypeptide is FMN-dependent NADH:quinone oxidoreductase (Escherichia coli O6:H1 (strain CFT073 / ATCC 700928 / UPEC)).